The primary structure comprises 327 residues: Sphingomyelin synthase-related 2 (327 aa).

5 helical membrane passes run 54-74, 99-119, 131-151, 192-212, and 220-240; these read LLATAMVGVGWLSNEVALAWV, AIRIAEYIMMILLISALLVMF, VFFCIAMAYSFRALCVTIFQV, LCGDLIVSGHTLTIFTAFLVF, and LQPLSHIYHVLAFTALFSILL. Residue histidine 201 is part of the active site. The Cytoplasmic segment spans residues 241 to 327; sequence ARKHYMIDIV…TLKKSRRSFE (87 aa). Active-site residues include histidine 244 and aspartate 248.

Belongs to the sphingomyelin synthase family.

The protein resides in the membrane. The sequence is that of Sphingomyelin synthase-related 2 from Caenorhabditis elegans.